Consider the following 101-residue polypeptide: Urease subunit beta (101 aa).

The protein belongs to the urease beta subunit family. In terms of assembly, heterotrimer of UreA (gamma), UreB (beta) and UreC (alpha) subunits. Three heterotrimers associate to form the active enzyme.

The protein resides in the cytoplasm. The catalysed reaction is urea + 2 H2O + H(+) = hydrogencarbonate + 2 NH4(+). Its pathway is nitrogen metabolism; urea degradation; CO(2) and NH(3) from urea (urease route): step 1/1. This is Urease subunit beta from Agrobacterium fabrum (strain C58 / ATCC 33970) (Agrobacterium tumefaciens (strain C58)).